A 260-amino-acid polypeptide reads, in one-letter code: 3'-5' ssDNA/RNA exonuclease TatD (260 aa).

A divalent metal cation-binding residues include glutamate 91, histidine 127, and histidine 152.

The protein belongs to the metallo-dependent hydrolases superfamily. TatD-type hydrolase family. TatD subfamily. As to quaternary structure, monomer. Mg(2+) is required as a cofactor.

The protein resides in the cytoplasm. In terms of biological role, 3'-5' exonuclease that prefers single-stranded DNA and RNA. May play a role in the H(2)O(2)-induced DNA damage repair. In Enterobacter sp. (strain 638), this protein is 3'-5' ssDNA/RNA exonuclease TatD.